The sequence spans 273 residues: 4-hydroxy-tetrahydrodipicolinate reductase (273 aa).

NAD(+) is bound by residues 12–17 (GAGGRM) and Glu38. Residue Arg39 participates in NADP(+) binding. NAD(+) is bound by residues 102–104 (GTT) and 126–129 (AANF). His159 (proton donor/acceptor) is an active-site residue. Position 160 (His160) interacts with (S)-2,3,4,5-tetrahydrodipicolinate. The active-site Proton donor is Lys163. 169-170 (GT) is a (S)-2,3,4,5-tetrahydrodipicolinate binding site.

It belongs to the DapB family. As to quaternary structure, homotetramer.

The protein localises to the cytoplasm. It carries out the reaction (S)-2,3,4,5-tetrahydrodipicolinate + NAD(+) + H2O = (2S,4S)-4-hydroxy-2,3,4,5-tetrahydrodipicolinate + NADH + H(+). It catalyses the reaction (S)-2,3,4,5-tetrahydrodipicolinate + NADP(+) + H2O = (2S,4S)-4-hydroxy-2,3,4,5-tetrahydrodipicolinate + NADPH + H(+). The protein operates within amino-acid biosynthesis; L-lysine biosynthesis via DAP pathway; (S)-tetrahydrodipicolinate from L-aspartate: step 4/4. Catalyzes the conversion of 4-hydroxy-tetrahydrodipicolinate (HTPA) to tetrahydrodipicolinate. The polypeptide is 4-hydroxy-tetrahydrodipicolinate reductase (Salmonella schwarzengrund (strain CVM19633)).